Consider the following 422-residue polypeptide: ATP-dependent Clp protease ATP-binding subunit ClpX 1 (422 aa).

One can recognise a ClpX-type ZB domain in the interval 4–57 (DRKNRESGKLLYCSFCGKSQHEVRKLIAGPAVFVCDECVELCNDIIREDLQGSE). 4 residues coordinate Zn(2+): Cys16, Cys19, Cys38, and Cys41. 120–127 (PTGSGKTL) serves as a coordination point for ATP.

This sequence belongs to the ClpX chaperone family. Component of the ClpX-ClpP complex. Forms a hexameric ring that, in the presence of ATP, binds to fourteen ClpP subunits assembled into a disk-like structure with a central cavity, resembling the structure of eukaryotic proteasomes.

Its function is as follows. ATP-dependent specificity component of the Clp protease. It directs the protease to specific substrates. Can perform chaperone functions in the absence of ClpP. The protein is ATP-dependent Clp protease ATP-binding subunit ClpX 1 of Methylococcus capsulatus (strain ATCC 33009 / NCIMB 11132 / Bath).